We begin with the raw amino-acid sequence, 520 residues long: Fumarate hydratase, mitochondrial (520 aa).

Residues 1-39 constitute a mitochondrion transit peptide; sequence MASVAHISTAKAIFRAGGLPCRRLITPTLTGLPLKTHRM. Residues 153–155, 184–187, 194–196, and T242 each bind substrate; these read SGT, HPND, and SSN. H243 acts as the Proton donor/acceptor in catalysis. S373 is an active-site residue. Substrate is bound by residues S374 and 379 to 381; that span reads KVN.

The protein belongs to the class-II fumarase/aspartase family. Fumarase subfamily. As to quaternary structure, homotetramer.

It localises to the mitochondrion matrix. It is found in the cytoplasm. The protein resides in the nucleus. The enzyme catalyses (S)-malate = fumarate + H2O. Its pathway is carbohydrate metabolism; tricarboxylic acid cycle; (S)-malate from fumarate: step 1/1. In terms of biological role, catalyzes the reversible stereospecific interconversion of fumarate to L-malate. In mitochondrion, catalyzes the hydration of fumarate to L-malate in the tricarboxylic acid (TCA) cycle to facilitate a transition step in the production of energy in the form of NADH. In cytoplasm and nucleus, involved in DNA repair in response to DNA damage: following DNA double-strand breaks (DSBs), translocates from the cytosol to the nucleus and promotes DNA repair by catalyzing the dehydration of L-malate to fumarate. The protein is Fumarate hydratase, mitochondrial (fum1) of Schizosaccharomyces pombe (strain 972 / ATCC 24843) (Fission yeast).